The sequence spans 464 residues: Putative F-box/LRR-repeat protein At3g59160 (464 aa).

The 49-residue stretch at 12–60 (KDMINDLPDALLCHVLSYLTTKEAASTSLLSRRWRYLLAFVPNLEFDDS) folds into the F-box domain. 6 LRR repeats span residues 172 to 198 (TLKI…HLES), 200 to 225 (MFDE…VLHH), 233 to 258 (SCSV…GMHE), 336 to 367 (VLCL…TIQS), 368 to 393 (TPKV…VFQG), and 408 to 433 (KIEK…VLHY).

This Arabidopsis thaliana (Mouse-ear cress) protein is Putative F-box/LRR-repeat protein At3g59160.